A 115-amino-acid polypeptide reads, in one-letter code: Large ribosomal subunit protein bL19 (115 aa).

It belongs to the bacterial ribosomal protein bL19 family.

In terms of biological role, this protein is located at the 30S-50S ribosomal subunit interface and may play a role in the structure and function of the aminoacyl-tRNA binding site. This is Large ribosomal subunit protein bL19 from Clostridium perfringens (strain ATCC 13124 / DSM 756 / JCM 1290 / NCIMB 6125 / NCTC 8237 / Type A).